A 249-amino-acid polypeptide reads, in one-letter code: ATP synthase subunit a (249 aa).

A run of 6 helical transmembrane segments spans residues 33–53 (YMLIAVAIISLLMLASGAQLV), 83–103 (FFPLIFSLFMFICVSNLIGII), 113–133 (LIVTAALALLVFFTVLIYGVA), 139–159 (FFSIFVPHGVPGYILPLVMFI), 188–208 (VFAGFVAMLGFSLGALGWVGG), and 216–236 (VALYALEILVAFLQAYVFAIL).

Belongs to the ATPase A chain family. F-type ATPases have 2 components, CF(1) - the catalytic core - and CF(0) - the membrane proton channel. CF(1) has five subunits: alpha(3), beta(3), gamma(1), delta(1), epsilon(1). CF(0) has three main subunits: a(1), b(2) and c(9-12). The alpha and beta chains form an alternating ring which encloses part of the gamma chain. CF(1) is attached to CF(0) by a central stalk formed by the gamma and epsilon chains, while a peripheral stalk is formed by the delta and b chains.

Its subcellular location is the cell inner membrane. Functionally, key component of the proton channel; it plays a direct role in the translocation of protons across the membrane. The chain is ATP synthase subunit a from Bradyrhizobium diazoefficiens (strain JCM 10833 / BCRC 13528 / IAM 13628 / NBRC 14792 / USDA 110).